A 194-amino-acid chain; its full sequence is 2,4-dinitrotoluene dioxygenase system, small oxygenase component (194 aa).

This sequence belongs to the bacterial ring-hydroxylating dioxygenase beta subunit family. In terms of assembly, the 2,4-dinitrotoluene dioxygenase (DNTDO) multicomponent enzyme system is composed of an electron transfer component and a dioxygenase component (iron sulfur protein (ISP)). The electron transfer component is composed of a ferredoxin reductase (DntAa) and a ferredoxin (DntAb), and the dioxygenase component is formed of a large alpha subunit (DntAc) and a small beta subunit (DntAd).

Component of the 2,4-dinitrotoluene dioxygenase (DNTDO) multicomponent enzyme system which catalyzes the incorporation of both atoms of molecular oxygen into 2,4-dinitrotoluene (DNT) to form 4-methyl-5-nitrocatechol (MNC) and nitrite. The beta subunit seems to have a structural role in the holoenzyme. Also able to convert naphthalene to cis-(1R,2S)-dihydroxy-1,2-dihydronaphthalene. This Burkholderia sp. (strain RASC) protein is 2,4-dinitrotoluene dioxygenase system, small oxygenase component.